Here is a 660-residue protein sequence, read N- to C-terminus: Kinesin-like protein KIF22 (660 aa).

Positions 1–31 (MSLRAKTCPQRREMASATSGPGRCVSKGGLG) are disordered. Residues 38-363 (RVRVAVRLRP…LNFTARSKEV (326 aa)) form the Kinesin motor domain. Position 122-129 (122-129 (GPTGAGKT)) interacts with ATP. Positions 391 to 418 (PSEAKKAKGPEEESTGSPESTAAPASAS) are disordered. A compositionally biased stretch (low complexity) spans 405–418 (TGSPESTAAPASAS). Phosphoserine occurs at positions 407, 422, and 447. Lys460 is covalently cross-linked (Glycyl lysine isopeptide (Lys-Gly) (interchain with G-Cter in SUMO2)). Positions 460-505 (KRERMVLMKTVEEKNLEIERLKMKQKELEAKVLAQEAPDPREKENT) form a coiled coil. Disordered stretches follow at residues 493-516 (AQEA…ASYS) and 534-567 (IQKQ…VEKD). A compositionally biased stretch (polar residues) spans 505–516 (TPTILQPPASYS). Ser540 and Ser576 each carry phosphoserine.

It belongs to the TRAFAC class myosin-kinesin ATPase superfamily. Kinesin family. Interacts with FAM83D and SIAH1. Post-translationally, ubiquitinated; mediated by SIAH1 and leading to its subsequent proteasomal degradation.

It localises to the nucleus. The protein resides in the cytoplasm. It is found in the cytoskeleton. Its function is as follows. Kinesin family member that is involved in spindle formation and the movements of chromosomes during mitosis and meiosis. Binds to microtubules and to DNA. Plays a role in congression of laterally attached chromosomes in NDC80-depleted cells. This Mus musculus (Mouse) protein is Kinesin-like protein KIF22 (Kif22).